The following is a 57-amino-acid chain: uncharacterized protein (57 aa).

The interval 31–57 (HHQTSSFNPMPSEVSLHTSHNFPHTTF) is disordered. Residues 33-57 (QTSSFNPMPSEVSLHTSHNFPHTTF) are compositionally biased toward polar residues.

This is an uncharacterized protein from Invertebrate iridescent virus 6 (IIV-6).